Here is a 267-residue protein sequence, read N- to C-terminus: Hydroxyacylglutathione hydrolase (267 aa).

The Zn(2+) site is built by His55, His57, Asp59, His60, His121, Asp138, and His176.

The protein belongs to the metallo-beta-lactamase superfamily. Glyoxalase II family. As to quaternary structure, monomer. It depends on Zn(2+) as a cofactor.

The enzyme catalyses an S-(2-hydroxyacyl)glutathione + H2O = a 2-hydroxy carboxylate + glutathione + H(+). Its pathway is secondary metabolite metabolism; methylglyoxal degradation; (R)-lactate from methylglyoxal: step 2/2. Its function is as follows. Thiolesterase that catalyzes the hydrolysis of S-D-lactoyl-glutathione to form glutathione and D-lactic acid. The protein is Hydroxyacylglutathione hydrolase of Shewanella sp. (strain ANA-3).